The primary structure comprises 745 residues: Exocyst complex component 3 (745 aa).

Lysine 28 carries the N6-acetyllysine modification.

The protein belongs to the SEC6 family. The exocyst complex is composed of EXOC1, EXOC2, EXOC3, EXOC4, EXOC5, EXOC6, EXOC7 and EXOC8. Interacts with EXOC3L1. Interacts with BIRC6/bruce. Interacts with MYRIP. Interacts with SLC6A9. As to expression, expressed in epididymis (at protein level).

The protein resides in the cytoplasm. It is found in the perinuclear region. It localises to the cell projection. The protein localises to the growth cone. Its subcellular location is the midbody. The protein resides in the golgi apparatus. It is found in the neuron projection. Component of the exocyst complex involved in the docking of exocytic vesicles with fusion sites on the plasma membrane. The chain is Exocyst complex component 3 (EXOC3) from Homo sapiens (Human).